Here is a 286-residue protein sequence, read N- to C-terminus: NAD kinase (286 aa).

Catalysis depends on aspartate 74, which acts as the Proton acceptor. Residues 74 to 75 (DG), 148 to 149 (ND), aspartate 178, alanine 186, 189 to 194 (TAYNLS), and glutamine 244 each bind NAD(+).

It belongs to the NAD kinase family. Requires a divalent metal cation as cofactor.

It localises to the cytoplasm. The enzyme catalyses NAD(+) + ATP = ADP + NADP(+) + H(+). Functionally, involved in the regulation of the intracellular balance of NAD and NADP, and is a key enzyme in the biosynthesis of NADP. Catalyzes specifically the phosphorylation on 2'-hydroxyl of the adenosine moiety of NAD to yield NADP. This Campylobacter jejuni subsp. doylei (strain ATCC BAA-1458 / RM4099 / 269.97) protein is NAD kinase.